The sequence spans 429 residues: Chaperone SurA (429 aa).

A signal peptide spans 1–18 (MFKRIALVCALFSGVCFA). PpiC domains are found at residues 170–271 (NLTY…KLVA) and 281–380 (ITQT…EVIA).

The protein localises to the periplasm. The catalysed reaction is [protein]-peptidylproline (omega=180) = [protein]-peptidylproline (omega=0). Its function is as follows. Chaperone involved in the correct folding and assembly of outer membrane proteins. Recognizes specific patterns of aromatic residues and the orientation of their side chains, which are found more frequently in integral outer membrane proteins. May act in both early periplasmic and late outer membrane-associated steps of protein maturation. This is Chaperone SurA from Legionella pneumophila subsp. pneumophila (strain Philadelphia 1 / ATCC 33152 / DSM 7513).